The sequence spans 393 residues: Protein TsgA (393 aa).

Residues 1 to 10 lie on the Cytoplasmic side of the membrane; sequence MTNSNRIKLT. The helical transmembrane segment at 11 to 31 threads the bilayer; it reads WISFLSYALTGALVIVTGMVM. At 32-50 the chain is on the periplasmic side; the sequence is GNIADYFHLPVSSMSNTFT. The helical transmembrane segment at 51-71 threads the bilayer; sequence FLNAGILISIFLNAWLMEIIP. Residues 72-77 lie on the Cytoplasmic side of the membrane; sequence LKTQLR. A helical transmembrane segment spans residues 78 to 98; it reads FGFILMVLAVAGLMFGHSLAL. Residues 99 to 100 are Periplasmic-facing; that stretch reads FS. A helical transmembrane segment spans residues 101-121; that stretch reads AAMFVLGLVSGITMSIGTFLI. The Cytoplasmic portion of the chain corresponds to 122–133; the sequence is TQLYEGRQRGSR. The chain crosses the membrane as a helical span at residues 134–154; it reads LLFTDSFFSMAGMIFPMVAAF. Topologically, residues 155–161 are periplasmic; it reads LLARSIE. The chain crosses the membrane as a helical span at residues 162–182; that stretch reads WYWVYACIGLVYLAIFILTFG. Residues 183–205 lie on the Cytoplasmic side of the membrane; the sequence is CEFPALGKHAQHSQAPVVKEKWG. The chain crosses the membrane as a helical span at residues 206 to 226; the sequence is IGVLFLAVAALCYILGQLGFI. The Periplasmic segment spans residues 227 to 244; it reads SWVPEYAKGLGMSLNDAG. Residues 245 to 265 traverse the membrane as a helical segment; sequence ALVSDFWMSYMFGMWAFSFIL. Residues 266 to 272 are Cytoplasmic-facing; the sequence is RFFDLQR. The helical transmembrane segment at 273 to 293 threads the bilayer; it reads ILTVLAGMAAVLMYLFITGTQ. At 294-297 the chain is on the periplasmic side; the sequence is AHMP. Residues 298–318 form a helical membrane-spanning segment; it reads WFILTLGFFSSAIYTSIITLG. Residues 319 to 331 are Cytoplasmic-facing; that stretch reads SQQTKVASPKLVN. The chain crosses the membrane as a helical span at residues 332-352; that stretch reads FILTCGTIGTMLTFVVTGPIV. The Periplasmic portion of the chain corresponds to 353–360; the sequence is AHSGPQAA. A helical transmembrane segment spans residues 361–381; it reads LLTANGLYAVVFVMCFALGFV. The Cytoplasmic segment spans residues 382-393; it reads SRHRQHSAPATH.

Belongs to the major facilitator superfamily. TsgA family.

The protein localises to the cell inner membrane. This Salmonella choleraesuis (strain SC-B67) protein is Protein TsgA.